We begin with the raw amino-acid sequence, 406 residues long: MHPAVFLSLPDLRCSLLLLVTWVFTPVTTEITSLDTENIDEILNNADVALVNFYADWCRFSQMLHPIFEEASDVIKEEFPNENQVVFARVDCDQHSDIAQRYRISKYPTLKLFRNGMMMKREYRGQRSVKALADYIRQQKSDPIQEIRDLAEITTLDRSKRNIIGYFEQKDSDNYRVFERVANILHDDCAFLSAFGDVSKPERYSGDNIIYKPPGHSAPDMVYLGAMTNFDVTYNWIQDKCVPLVREITFENGEELTEEGLPFLILFHMKEDTESLEIFQNEVARQLISEKGTINFLHADCDKFRHPLLHIQKTPADCPVIAIDSFRHMYVFGDFKDVLIPGKLKQFVFDLHSGKLHREFHHGPDPTDTAPGEQAQDVASSPPESSFQKLAPSEYRYTLLRDRDEL.

Residues 1–29 (MHPAVFLSLPDLRCSLLLLVTWVFTPVTT) form the signal peptide. Positions 30-138 (EITSLDTENI…VKALADYIRQ (109 aa)) constitute a Thioredoxin domain. 2 disulfide bridges follow: cysteine 189/cysteine 241 and cysteine 301/cysteine 318. The tract at residues 236-285 (WIQDKCVPLVREITFENGEELTEEGLPFLILFHMKEDTESLEIFQNEVAR) is interaction with ITPR1. Residues 360-387 (FHHGPDPTDTAPGEQAQDVASSPPESSF) are disordered. Positions 377–387 (DVASSPPESSF) are enriched in polar residues. A Prevents secretion from ER motif is present at residues 403-406 (RDEL).

As to quaternary structure, forms mixed disulfides with both ERO1A and ERO1B and cargo folding intermediates; the interactions with ERO1A and ERO1B result in their retention in the endoplasmic reticulum. Directly interacts with ITPR1 in a pH-, redox state- and calcium-dependent manner, but not with ITPR2 or ITPR3. The strength of this interaction inversely correlates with calcium concentration.

It localises to the endoplasmic reticulum lumen. Its function is as follows. Mediates thiol-dependent retention in the early secretory pathway, forming mixed disulfides with substrate proteins through its conserved CRFS motif. Inhibits the calcium channel activity of ITPR1. May have a role in the control of oxidative protein folding in the endoplasmic reticulum. Required to retain ERO1A and ERO1B in the endoplasmic reticulum. The sequence is that of Endoplasmic reticulum resident protein 44 (ERP44) from Homo sapiens (Human).